Reading from the N-terminus, the 507-residue chain is Putative pentatricopeptide repeat-containing protein At3g16710, mitochondrial (507 aa).

A mitochondrion-targeting transit peptide spans 1–48 (MRRSIATGFASIVKGFHLHSHRHRLQISNPRTAASLSLCGFCFWIRAF). PPR repeat units follow at residues 47–81 (AFSSYRKILRNGLHNLQFNDALDLFTRMVHSRPLP), 82–116 (SIIDFTRLLSVIAKMNRYDVVISLFEQMQILGIPP), 117–151 (LLCTCNIVMHCVCLSSQPCRASCFLGKMMKLGFEP), 152–186 (DLVTFTSLLNGYCHWNRIEDAIALFDQILGMGFKP), 187–221 (NVVTYTTLIRCLCKNRHLNHAVELFNQMGTNGSRP), 222–256 (NVVTYNALVTGLCEIGRWGDAAWLLRDMMKRRIEP), 257–291 (NVITFTALIDAFVKVGKLMEAKELYNVMIQMSVYP), 292–326 (DVFTYGSLINGLCMYGLLDEARQMFYLMERNGCYP), 327–361 (NEVIYTTLIHGFCKSKRVEDGMKIFYEMSQKGVVA), 362–396 (NTITYTVLIQGYCLVGRPDVAQEVFNQMSSRRAPP), 397–431 (DIRTYNVLLDGLCCNGKVEKALMIFEYMRKREMDI), 432–466 (NIVTYTIIIQGMCKLGKVEDAFDLFCSLFSKGMKP), and 467–501 (NVITYTTMISGFCRRGLIHEADSLFKKMKEDGFLP).

Belongs to the PPR family. P subfamily.

The protein resides in the mitochondrion. The chain is Putative pentatricopeptide repeat-containing protein At3g16710, mitochondrial from Arabidopsis thaliana (Mouse-ear cress).